A 192-amino-acid polypeptide reads, in one-letter code: Fe/S biogenesis protein NfuA (192 aa).

2 residues coordinate [4Fe-4S] cluster: cysteine 150 and cysteine 153.

Belongs to the NfuA family. As to quaternary structure, homodimer. Requires [4Fe-4S] cluster as cofactor.

Involved in iron-sulfur cluster biogenesis. Binds a 4Fe-4S cluster, can transfer this cluster to apoproteins, and thereby intervenes in the maturation of Fe/S proteins. Could also act as a scaffold/chaperone for damaged Fe/S proteins. This is Fe/S biogenesis protein NfuA from Buchnera aphidicola subsp. Acyrthosiphon pisum (strain 5A).